Reading from the N-terminus, the 354-residue chain is Putative Xaa-Pro aminopeptidase (354 aa).

Residues aspartate 213, aspartate 224, histidine 290, glutamate 319, and glutamate 333 each contribute to the Mn(2+) site.

Belongs to the peptidase M24B family. The cofactor is Mn(2+).

The catalysed reaction is Release of any N-terminal amino acid, including proline, that is linked to proline, even from a dipeptide or tripeptide.. The protein is Putative Xaa-Pro aminopeptidase (pepP) of Mycoplasma pneumoniae (strain ATCC 29342 / M129 / Subtype 1) (Mycoplasmoides pneumoniae).